Consider the following 138-residue polypeptide: Basic phospholipase A2 RV-4 (138 aa).

The signal sequence occupies residues 1 to 16 (MRTLWIVAVCLIGVEG). Intrachain disulfides connect Cys42–Cys131, Cys44–Cys60, Cys59–Cys111, Cys65–Cys138, Cys66–Cys104, Cys73–Cys97, and Cys91–Cys102. Residues Tyr43, Gly45, and Gly47 each contribute to the Ca(2+) site. His63 is an active-site residue. Asp64 contributes to the Ca(2+) binding site. The active site involves Asp105.

This sequence belongs to the phospholipase A2 family. Group II subfamily. D49 sub-subfamily. In terms of assembly, heterodimer of a weakly toxic basic protein having phospholipase A2 activity (RV-4) and a non-toxic acidic protein which inhibits its enzymatic activity but potentiates its lethal potency and neurotoxicity (RV-7). Requires Ca(2+) as cofactor. In terms of tissue distribution, expressed by the venom gland.

The protein resides in the secreted. It carries out the reaction a 1,2-diacyl-sn-glycero-3-phosphocholine + H2O = a 1-acyl-sn-glycero-3-phosphocholine + a fatty acid + H(+). In terms of biological role, heterodimer RV-4/RV-7: acts as a presynaptic neurotoxin. Its function is as follows. Monomer: snake venom phospholipase A2 (PLA2) that acts as a presynaptic neurotoxin. PLA2 catalyzes the calcium-dependent hydrolysis of the 2-acyl groups in 3-sn-phosphoglycerides. The chain is Basic phospholipase A2 RV-4 from Daboia siamensis (Eastern Russel's viper).